We begin with the raw amino-acid sequence, 626 residues long: DNA-directed RNA polymerase subunit beta C-terminal section (626 aa).

The segment at 287 to 307 (NTKSKNTGKGSKPPRASKAQN) is disordered.

This sequence belongs to the RNA polymerase beta chain family. In plastids the minimal PEP RNA polymerase catalytic core is composed of four subunits: alpha, beta, beta', and beta''. When a (nuclear-encoded) sigma factor is associated with the core the holoenzyme is formed, which can initiate transcription.

It is found in the plastid. Its subcellular location is the chloroplast. It carries out the reaction RNA(n) + a ribonucleoside 5'-triphosphate = RNA(n+1) + diphosphate. DNA-dependent RNA polymerase catalyzes the transcription of DNA into RNA using the four ribonucleoside triphosphates as substrates. The polypeptide is DNA-directed RNA polymerase subunit beta C-terminal section (rpoB2) (Chlamydomonas reinhardtii (Chlamydomonas smithii)).